Reading from the N-terminus, the 391-residue chain is ATP phosphoribosyltransferase regulatory subunit (391 aa).

This sequence belongs to the class-II aminoacyl-tRNA synthetase family. HisZ subfamily. Heteromultimer composed of HisG and HisZ subunits.

The protein resides in the cytoplasm. It functions in the pathway amino-acid biosynthesis; L-histidine biosynthesis; L-histidine from 5-phospho-alpha-D-ribose 1-diphosphate: step 1/9. Required for the first step of histidine biosynthesis. May allow the feedback regulation of ATP phosphoribosyltransferase activity by histidine. This Prochlorococcus marinus (strain SARG / CCMP1375 / SS120) protein is ATP phosphoribosyltransferase regulatory subunit.